The primary structure comprises 277 residues: Digeranylgeranylglyceryl phosphate synthase (277 aa).

A run of 7 helical transmembrane segments spans residues 13 to 33 (PGNA…AGGL), 40 to 60 (AFAV…NDYF), 89 to 109 (VALF…AIAI), 143 to 163 (FLYG…LFAL), 199 to 219 (RSLY…PLPY), 220 to 240 (LLGL…CGLA), and 256 to 276 (WLKA…LAVV).

The protein belongs to the UbiA prenyltransferase family. DGGGP synthase subfamily. Mg(2+) serves as cofactor.

Its subcellular location is the cell membrane. The enzyme catalyses sn-3-O-(geranylgeranyl)glycerol 1-phosphate + (2E,6E,10E)-geranylgeranyl diphosphate = 2,3-bis-O-(geranylgeranyl)-sn-glycerol 1-phosphate + diphosphate. The protein operates within membrane lipid metabolism; glycerophospholipid metabolism. Prenyltransferase that catalyzes the transfer of the geranylgeranyl moiety of geranylgeranyl diphosphate (GGPP) to the C2 hydroxyl of (S)-3-O-geranylgeranylglyceryl phosphate (GGGP). This reaction is the second ether-bond-formation step in the biosynthesis of archaeal membrane lipids. The chain is Digeranylgeranylglyceryl phosphate synthase from Natronomonas pharaonis (strain ATCC 35678 / DSM 2160 / CIP 103997 / JCM 8858 / NBRC 14720 / NCIMB 2260 / Gabara) (Halobacterium pharaonis).